We begin with the raw amino-acid sequence, 286 residues long: D-tagatose-1,6-bisphosphate aldolase subunit KbaY (286 aa).

The active-site Proton donor is the D82. Positions 83 and 180 each coordinate Zn(2+). A dihydroxyacetone phosphate-binding site is contributed by G181. Zn(2+) is bound at residue H208. Residues 209-211 and 230-233 each bind dihydroxyacetone phosphate; these read GAS and NVAT.

It belongs to the class II fructose-bisphosphate aldolase family. TagBP aldolase KbaY subfamily. Homotetramer. Forms a complex with KbaZ. Zn(2+) serves as cofactor.

The enzyme catalyses D-tagatofuranose 1,6-bisphosphate = D-glyceraldehyde 3-phosphate + dihydroxyacetone phosphate. The protein operates within carbohydrate metabolism; D-tagatose 6-phosphate degradation; D-glyceraldehyde 3-phosphate and glycerone phosphate from D-tagatose 6-phosphate: step 2/2. Its function is as follows. Catalytic subunit of the tagatose-1,6-bisphosphate aldolase KbaYZ, which catalyzes the reversible aldol condensation of dihydroxyacetone phosphate (DHAP or glycerone-phosphate) with glyceraldehyde 3-phosphate (G3P) to produce tagatose 1,6-bisphosphate (TBP). Requires KbaZ subunit for full activity and stability. This is D-tagatose-1,6-bisphosphate aldolase subunit KbaY from Escherichia coli O127:H6 (strain E2348/69 / EPEC).